We begin with the raw amino-acid sequence, 501 residues long: uncharacterized protein (501 aa).

2 disordered regions span residues E179–A404 and S480–D501. Residues S191–R200 show a composition bias toward basic and acidic residues. The segment covering D201 to K214 has biased composition (basic residues). Residues K215–I226 are compositionally biased toward basic and acidic residues. The span at S231–T274 shows a compositional bias: low complexity. Positions N304–S316 are enriched in basic and acidic residues. Positions D333–D352 are enriched in polar residues. Acidic residues predominate over residues E379 to T403.

This is an uncharacterized protein from Acanthamoeba polyphaga mimivirus (APMV).